The primary structure comprises 1014 residues: Protein argonaute 2 (1014 aa).

Over residues 1–15 (MERGGYRGGRGDGRG) the composition is skewed to basic and acidic residues. Residues 1 to 137 (MERGGYRGGR…PSTSTTVVSE (137 aa)) are disordered. 2 stretches are compositionally biased toward gly residues: residues 18–29 (GRGYGGGGGGGE) and 49–58 (RGGGNRGQGR). A compositionally biased stretch (low complexity) spans 83–104 (QFQQPRPQVAPQPSQAPASYAG). Residues 105–114 (SVGGVAGRGA) show a composition bias toward gly residues. A compositionally biased stretch (low complexity) spans 121-137 (VPSDSASPSTSTTVVSE). A PAZ domain is found at 369-482 (SVIEYLKLYF…VPMEFCDLVE (114 aa)). A Piwi domain is found at 666 to 965 (LVLCAMSRKD…VAFRGRMYHE (300 aa)). Interaction with guide RNA stretches follow at residues 857–858 (KR), 900–908 (HHGGIGTSK), and 937–959 (FTRCTKPVSLVPPVYYADMVAFR).

It belongs to the argonaute family. Ago subfamily. As to quaternary structure, interacts with NERD.

Its function is as follows. Involved in RNA-mediated post-transcriptional gene silencing (PTGS). Main component of the RNA-induced silencing complex (RISC) that binds to a short guide RNA such as microRNA (miRNA) or small interfering RNA (siRNA). RISC uses the mature miRNA or siRNA as a guide for slicer-directed cleavage of homologous mRNAs to repress gene expression. Associates mainly with siRNAs of 21 nucleotide in length and preferentially recruits small RNAs with a 5' terminal adenosine. Probably involved in antiviral RNA silencing. Associates with siRNA derived from cucumber mosaic virus (CMV). Targeted by turnip yellows virus (TuYV) protein P0 (via F-box-like domain) for probable proteasome degradation and thereby inactivating AGO2 function in RNA silencing. Required to direct NERD-dependent DNA methylation and silencing. The polypeptide is Protein argonaute 2 (AGO2) (Arabidopsis thaliana (Mouse-ear cress)).